Reading from the N-terminus, the 341-residue chain is UDP-3-O-acylglucosamine N-acyltransferase (341 aa).

H241 serves as the catalytic Proton acceptor.

Belongs to the transferase hexapeptide repeat family. LpxD subfamily. As to quaternary structure, homotrimer.

It carries out the reaction a UDP-3-O-[(3R)-3-hydroxyacyl]-alpha-D-glucosamine + a (3R)-hydroxyacyl-[ACP] = a UDP-2-N,3-O-bis[(3R)-3-hydroxyacyl]-alpha-D-glucosamine + holo-[ACP] + H(+). It functions in the pathway bacterial outer membrane biogenesis; LPS lipid A biosynthesis. Catalyzes the N-acylation of UDP-3-O-acylglucosamine using 3-hydroxyacyl-ACP as the acyl donor. Is involved in the biosynthesis of lipid A, a phosphorylated glycolipid that anchors the lipopolysaccharide to the outer membrane of the cell. In Saccharophagus degradans (strain 2-40 / ATCC 43961 / DSM 17024), this protein is UDP-3-O-acylglucosamine N-acyltransferase.